We begin with the raw amino-acid sequence, 80 residues long: Toxin-like peptide AaF1CA1 (80 aa).

A signal peptide spans 1 to 22 (MMKLVLFSVIVILFSLIGSIHG). Residues 25–80 (VPGNYPLRPFRYRYGCAVPGDSDYCVRVCRKHGVRYGYCWFFTCWCEYLEDKNIKI) enclose the LCN-type CS-alpha/beta domain. Disulfide bonds link Cys-40/Cys-63, Cys-49/Cys-68, and Cys-53/Cys-70.

The protein belongs to the long (3 C-C) scorpion toxin superfamily. In terms of tissue distribution, expressed by the venom gland.

It is found in the secreted. Functionally, probable ion channel inhibitor. The sequence is that of Toxin-like peptide AaF1CA1 from Androctonus australis (Sahara scorpion).